We begin with the raw amino-acid sequence, 225 residues long: MSTWMMFMFQESNSFYADNLVSFHNLVMMIIIMISTLTIYIIFDLFMNKFSNLFLLKNHNIEIIWTIVPIVILLIICFPSLKILYLIDEIINPFFSIKSIGHQWYWSYEYPEFNNIEFDSYMLNYSNLNQFRLLETDNRMIIPMKIPMRLITTSTDVIHSWTVPSLGIKVDAVPGRINQLNLISKRPGIFFGQCSEICGMNHSFMPIMVESTSFKFFLNWINKQN.

Residues 1 to 25 (MSTWMMFMFQESNSFYADNLVSFHN) are Mitochondrial intermembrane-facing. Residues 26-47 (LVMMIIIMISTLTIYIIFDLFM) traverse the membrane as a helical segment. Over 48 to 62 (NKFSNLFLLKNHNIE) the chain is Mitochondrial matrix. A helical membrane pass occupies residues 63-82 (IIWTIVPIVILLIICFPSLK). Residues 83-225 (ILYLIDEIIN…FFLNWINKQN (143 aa)) lie on the Mitochondrial intermembrane side of the membrane. Cu cation is bound by residues His159, Cys194, Glu196, Cys198, His202, and Met205. Position 196 (Glu196) interacts with Mg(2+).

This sequence belongs to the cytochrome c oxidase subunit 2 family. As to quaternary structure, component of the cytochrome c oxidase (complex IV, CIV), a multisubunit enzyme composed of a catalytic core of 3 subunits and several supernumerary subunits. The complex exists as a monomer or a dimer and forms supercomplexes (SCs) in the inner mitochondrial membrane with ubiquinol-cytochrome c oxidoreductase (cytochrome b-c1 complex, complex III, CIII). Cu cation is required as a cofactor.

It localises to the mitochondrion inner membrane. The catalysed reaction is 4 Fe(II)-[cytochrome c] + O2 + 8 H(+)(in) = 4 Fe(III)-[cytochrome c] + 2 H2O + 4 H(+)(out). Component of the cytochrome c oxidase, the last enzyme in the mitochondrial electron transport chain which drives oxidative phosphorylation. The respiratory chain contains 3 multisubunit complexes succinate dehydrogenase (complex II, CII), ubiquinol-cytochrome c oxidoreductase (cytochrome b-c1 complex, complex III, CIII) and cytochrome c oxidase (complex IV, CIV), that cooperate to transfer electrons derived from NADH and succinate to molecular oxygen, creating an electrochemical gradient over the inner membrane that drives transmembrane transport and the ATP synthase. Cytochrome c oxidase is the component of the respiratory chain that catalyzes the reduction of oxygen to water. Electrons originating from reduced cytochrome c in the intermembrane space (IMS) are transferred via the dinuclear copper A center (CU(A)) of subunit 2 and heme A of subunit 1 to the active site in subunit 1, a binuclear center (BNC) formed by heme A3 and copper B (CU(B)). The BNC reduces molecular oxygen to 2 water molecules using 4 electrons from cytochrome c in the IMS and 4 protons from the mitochondrial matrix. The protein is Cytochrome c oxidase subunit 2 (COII) of Apis koschevnikovi (Koschevnikov's honey bee).